Here is a 560-residue protein sequence, read N- to C-terminus: Membrane protein insertase YidC (560 aa).

6 consecutive transmembrane segments (helical) span residues 5 to 25 (IINL…WQYF), 334 to 354 (AIDF…MNFF), 357 to 377 (YVGN…LLMF), 431 to 451 (LPIL…YVTI), 476 to 496 (LFGL…WPIL), and 522 to 542 (FMPL…LIYW).

The protein belongs to the OXA1/ALB3/YidC family. Type 1 subfamily. In terms of assembly, interacts with the Sec translocase complex via SecD. Specifically interacts with transmembrane segments of nascent integral membrane proteins during membrane integration.

It is found in the cell inner membrane. In terms of biological role, required for the insertion and/or proper folding and/or complex formation of integral membrane proteins into the membrane. Involved in integration of membrane proteins that insert both dependently and independently of the Sec translocase complex, as well as at least some lipoproteins. Aids folding of multispanning membrane proteins. The chain is Membrane protein insertase YidC from Rickettsia prowazekii (strain Madrid E).